An 82-amino-acid polypeptide reads, in one-letter code: Defensin-like protein 275 (82 aa).

The N-terminal stretch at 1–23 is a signal peptide; sequence MALSKFQLVALLITYTLLFSCQS. Cystine bridges form between Cys-36–Cys-78, Cys-42–Cys-65, Cys-48–Cys-76, and Cys-52–Cys-77.

Belongs to the DEFL family.

Its subcellular location is the secreted. The polypeptide is Defensin-like protein 275 (Arabidopsis thaliana (Mouse-ear cress)).